The following is a 405-amino-acid chain: L-carnitine CoA-transferase (405 aa).

The CoA site is built by Lys97 and Arg104. Asp169 functions as the Nucleophile in the catalytic mechanism.

It belongs to the CoA-transferase III family. CaiB subfamily. Homodimer.

It localises to the cytoplasm. The enzyme catalyses crotonobetainyl-CoA + (R)-carnitine = crotonobetaine + (R)-carnitinyl-CoA. It catalyses the reaction 4-(trimethylamino)butanoyl-CoA + (R)-carnitine = (R)-carnitinyl-CoA + 4-(trimethylamino)butanoate. Its pathway is amine and polyamine metabolism; carnitine metabolism. Its function is as follows. Catalyzes the reversible transfer of the CoA moiety from gamma-butyrobetainyl-CoA to L-carnitine to generate L-carnitinyl-CoA and gamma-butyrobetaine. Is also able to catalyze the reversible transfer of the CoA moiety from gamma-butyrobetainyl-CoA or L-carnitinyl-CoA to crotonobetaine to generate crotonobetainyl-CoA. This is L-carnitine CoA-transferase from Escherichia coli O7:K1 (strain IAI39 / ExPEC).